The chain runs to 442 residues: Cell division protein FtsZ (442 aa).

GTP-binding positions include 18–22 (GGGVN), 105–107 (GTG), E136, R140, and D184. Low complexity predominate over residues 329–341 (AAPAAEPVQQQVP). The segment at 329 to 442 (AAPAAEPVQQ…DDLDVPSFLQ (114 aa)) is disordered. 2 stretches are compositionally biased toward basic and acidic residues: residues 349-362 (PEKE…REEN) and 390-431 (NDRD…RDDR).

This sequence belongs to the FtsZ family. Homodimer. Polymerizes to form a dynamic ring structure in a strictly GTP-dependent manner. Interacts directly with several other division proteins.

The protein localises to the cytoplasm. Functionally, essential cell division protein that forms a contractile ring structure (Z ring) at the future cell division site. The regulation of the ring assembly controls the timing and the location of cell division. One of the functions of the FtsZ ring is to recruit other cell division proteins to the septum to produce a new cell wall between the dividing cells. Binds GTP and shows GTPase activity. The protein is Cell division protein FtsZ of Corynebacterium glutamicum (strain ATCC 13032 / DSM 20300 / JCM 1318 / BCRC 11384 / CCUG 27702 / LMG 3730 / NBRC 12168 / NCIMB 10025 / NRRL B-2784 / 534).